Consider the following 310-residue polypeptide: HPr kinase/phosphorylase (310 aa).

Catalysis depends on residues His136 and Lys157. 151-158 (GDSGIGKS) contributes to the ATP binding site. Ser158 serves as a coordination point for Mg(2+). The Proton acceptor; for phosphorylation activity. Proton donor; for dephosphorylation activity role is filled by Asp175. The tract at residues 199-208 (LEIRGLGIIN) is important for the catalytic mechanism of both phosphorylation and dephosphorylation. Glu200 is a Mg(2+) binding site. Arg241 is an active-site residue. Residues 262–267 (PVRPGR) are important for the catalytic mechanism of dephosphorylation.

The protein belongs to the HPrK/P family. As to quaternary structure, homohexamer. Mg(2+) serves as cofactor.

It catalyses the reaction [HPr protein]-L-serine + ATP = [HPr protein]-O-phospho-L-serine + ADP + H(+). The catalysed reaction is [HPr protein]-O-phospho-L-serine + phosphate + H(+) = [HPr protein]-L-serine + diphosphate. Its function is as follows. Catalyzes the ATP- as well as the pyrophosphate-dependent phosphorylation of a specific serine residue in HPr, a phosphocarrier protein of the phosphoenolpyruvate-dependent sugar phosphotransferase system (PTS). HprK/P also catalyzes the pyrophosphate-producing, inorganic phosphate-dependent dephosphorylation (phosphorolysis) of seryl-phosphorylated HPr (P-Ser-HPr). The two antagonistic activities of HprK/P are regulated by several intracellular metabolites, which change their concentration in response to the absence or presence of rapidly metabolisable carbon sources (glucose, fructose, etc.) in the growth medium. Therefore, by controlling the phosphorylation state of HPr, HPrK/P is a sensor enzyme that plays a major role in the regulation of carbon metabolism and sugar transport: it mediates carbon catabolite repression (CCR), and regulates PTS-catalyzed carbohydrate uptake and inducer exclusion. The polypeptide is HPr kinase/phosphorylase (Staphylococcus epidermidis (strain ATCC 35984 / DSM 28319 / BCRC 17069 / CCUG 31568 / BM 3577 / RP62A)).